A 173-amino-acid polypeptide reads, in one-letter code: Regulatory protein RecX (173 aa).

This sequence belongs to the RecX family.

Its subcellular location is the cytoplasm. Modulates RecA activity. This chain is Regulatory protein RecX, found in Mycobacterium marinum (strain ATCC BAA-535 / M).